Reading from the N-terminus, the 693-residue chain is Polyribonucleotide nucleotidyltransferase (693 aa).

Residues D487 and D493 each contribute to the Mg(2+) site. The region spanning 554–613 (PRIYTIKINPEKIKDVIGKGGSIIRMLTEETGTVIEIKDDGIVKISAINGEKAKYAIKRI) is the KH domain. Positions 623-691 (GKIYSGKVTR…RQGRIRLSMK (69 aa)) constitute an S1 motif domain.

This sequence belongs to the polyribonucleotide nucleotidyltransferase family. Component of the RNA degradosome, which is a multiprotein complex involved in RNA processing and mRNA degradation. Mg(2+) serves as cofactor.

The protein localises to the cytoplasm. It carries out the reaction RNA(n+1) + phosphate = RNA(n) + a ribonucleoside 5'-diphosphate. Its function is as follows. Involved in mRNA degradation. Catalyzes the phosphorolysis of single-stranded polyribonucleotides processively in the 3'- to 5'-direction. This Buchnera aphidicola subsp. Cinara cedri (strain Cc) protein is Polyribonucleotide nucleotidyltransferase.